Here is a 314-residue protein sequence, read N- to C-terminus: Dihydroorotate dehydrogenase (fumarate) (314 aa).

FMN-binding positions include Ala21 and 45 to 46 (KS). Residues Lys45, 69–73 (NSMGL), and Asn129 each bind substrate. Asn129 lines the FMN pocket. Residue Cys132 is the Nucleophile of the active site. Substrate is bound at residue Asn134. Residues Lys166 and Val195 each coordinate FMN. 196–197 (NS) contacts substrate. FMN contacts are provided by residues Gly224, 251 to 252 (GG), and 273 to 274 (GT).

The protein belongs to the dihydroorotate dehydrogenase family. Type 1 subfamily. In terms of assembly, homodimer. FMN is required as a cofactor.

The protein resides in the cytoplasm. It catalyses the reaction (S)-dihydroorotate + fumarate = orotate + succinate. It functions in the pathway pyrimidine metabolism; UMP biosynthesis via de novo pathway. Functionally, catalyzes the conversion of dihydroorotate to orotate with fumarate as the electron acceptor. Molecular oxygen can replace fumarate in vitro. The polypeptide is Dihydroorotate dehydrogenase (fumarate) (pyr4) (Trypanosoma cruzi (strain CL Brener)).